We begin with the raw amino-acid sequence, 296 residues long: NAD kinase (296 aa).

The Proton acceptor role is filled by Asp73. NAD(+) contacts are provided by residues 73-74 (DG), Lys78, 151-152 (NE), Arg178, Asp180, and 191-196 (TAHAMS).

Belongs to the NAD kinase family. A divalent metal cation serves as cofactor.

The protein localises to the cytoplasm. It carries out the reaction NAD(+) + ATP = ADP + NADP(+) + H(+). In terms of biological role, involved in the regulation of the intracellular balance of NAD and NADP, and is a key enzyme in the biosynthesis of NADP. Catalyzes specifically the phosphorylation on 2'-hydroxyl of the adenosine moiety of NAD to yield NADP. The polypeptide is NAD kinase (Francisella tularensis subsp. tularensis (strain FSC 198)).